Reading from the N-terminus, the 226-residue chain is Orotate phosphoribosyltransferase 1 (226 aa).

Lysine 30 contacts 5-phospho-alpha-D-ribose 1-diphosphate. 38–39 lines the orotate pocket; the sequence is FF. 5-phospho-alpha-D-ribose 1-diphosphate-binding positions include 76-77, arginine 106, lysine 107, lysine 110, histidine 112, and 132-140; these read YK and DDVMTAGTA. 2 residues coordinate orotate: threonine 136 and arginine 164. 2 positions are modified to phosphoserine: serine 213 and serine 225.

The protein belongs to the purine/pyrimidine phosphoribosyltransferase family. PyrE subfamily. In terms of assembly, homodimer.

The enzyme catalyses orotidine 5'-phosphate + diphosphate = orotate + 5-phospho-alpha-D-ribose 1-diphosphate. It participates in pyrimidine metabolism; UMP biosynthesis via de novo pathway; UMP from orotate: step 1/2. Functionally, catalyzes the transfer of a ribosyl phosphate group from 5-phosphoribose 1-diphosphate to orotate, leading to the formation of orotidine monophosphate (OMP). In Saccharomyces cerevisiae (strain ATCC 204508 / S288c) (Baker's yeast), this protein is Orotate phosphoribosyltransferase 1 (URA5).